A 185-amino-acid polypeptide reads, in one-letter code: MADLRDEKGNPIHLTDTQGNPIVDLTDEHGNPMYLTGVVSSTPQHKESTTSDIAEHPTSTVGETHPAAAPAGAGAATAATATGVSAGTGATTTGQQHHGSLEEHLRRSGSSSSSSSEDDGQGGRRKKSIKEKIKEKFGSGKHKDEQTPATATTTGPATTDQPHEKKGILEKIKDKLPGHHNHNHP.

Composition is skewed to basic and acidic residues over residues 1–10 and 44–55; these read MADLRDEKGN and QHKESTTSDIAE. A disordered region spans residues 1–185; sequence MADLRDEKGN…LPGHHNHNHP (185 aa). Over residues 67 to 94 the composition is skewed to low complexity; it reads AAAPAGAGAATAATATGVSAGTGATTTG. Residues 130–146 show a composition bias toward basic and acidic residues; sequence KEKIKEKFGSGKHKDEQ. Residues 147–159 are compositionally biased toward low complexity; the sequence is TPATATTTGPATT. Residues 161–177 show a composition bias toward basic and acidic residues; that stretch reads QPHEKKGILEKIKDKLP.

It belongs to the plant dehydrin family.

The protein is Probable dehydrin LEA (LEA) of Arabidopsis thaliana (Mouse-ear cress).